Here is a 141-residue protein sequence, read N- to C-terminus: Large ribosomal subunit protein uL11 (141 aa).

This sequence belongs to the universal ribosomal protein uL11 family. In terms of assembly, part of the ribosomal stalk of the 50S ribosomal subunit. Interacts with L10 and the large rRNA to form the base of the stalk. L10 forms an elongated spine to which L12 dimers bind in a sequential fashion forming a multimeric L10(L12)X complex. Post-translationally, one or more lysine residues are methylated.

Its function is as follows. Forms part of the ribosomal stalk which helps the ribosome interact with GTP-bound translation factors. The sequence is that of Large ribosomal subunit protein uL11 from Synechocystis sp. (strain ATCC 27184 / PCC 6803 / Kazusa).